A 1237-amino-acid polypeptide reads, in one-letter code: Zinc finger protein 687 (1237 aa).

2 disordered regions span residues 1–80 (MGDM…PDIS) and 96–330 (EALA…PLKV). Residues 97–111 (ALAGGSAGDGAQAAG) are compositionally biased toward low complexity. Phosphoserine occurs at positions 102, 129, and 140. A compositionally biased stretch (pro residues) spans 132–144 (PSLPGTPHSPAPP). Thr148 is subject to Phosphothreonine. Phosphoserine occurs at positions 227, 242, 251, 253, 266, and 271. Residues 234–244 (LAQQGSGSSPK) show a composition bias toward polar residues. Lys285 participates in a covalent cross-link: Glycyl lysine isopeptide (Lys-Gly) (interchain with G-Cter in SUMO2). The span at 297-310 (SSPGSPQSPSSGAE) shows a compositional bias: low complexity. Residues Lys336 and Lys372 each participate in a glycyl lysine isopeptide (Lys-Gly) (interchain with G-Cter in SUMO2) cross-link. Ser374 bears the Phosphoserine mark. Thr377 bears the Phosphothreonine mark. Residues Lys384, Lys397, and Lys422 each participate in a glycyl lysine isopeptide (Lys-Gly) (interchain with G-Cter in SUMO2) cross-link. Ser433 is modified (phosphoserine). Residues Lys435, Lys439, Lys451, and Lys464 each participate in a glycyl lysine isopeptide (Lys-Gly) (interchain with G-Cter in SUMO2) cross-link. Ser495 carries the post-translational modification Phosphoserine. The C2H2-type 1; degenerate zinc-finger motif lies at 533 to 552 (YRCLECGDAFSLEKSLARHY). 5 C2H2-type zinc fingers span residues 705–727 (NVCP…QRMH), 764–787 (YRCP…QTSH), 792–815 (HKCP…YSQH), 827–849 (YKCA…FDQH), and 858–881 (FKCP…KNTH). Residues 880–890 (THQSGRLEETA) show a composition bias toward basic and acidic residues. Residues 880–957 (THQSGRLEET…LGSKGLKGGG (78 aa)) are disordered. Thr900 carries the phosphothreonine modification. The segment covering 915–925 (AAPATEESSSS) has biased composition (low complexity). Lys954 is covalently cross-linked (Glycyl lysine isopeptide (Lys-Gly) (interchain with G-Cter in SUMO2)). 2 C2H2-type zinc fingers span residues 963-986 (WTCG…KKEH) and 993-1016 (FPCR…RVNH). A Glycyl lysine isopeptide (Lys-Gly) (interchain with G-Cter in SUMO2) cross-link involves residue Lys1043. The interval 1051 to 1121 (LQLGAQSPGR…LRYRSSSSTE (71 aa)) is disordered. Phosphoserine is present on Ser1057. At Arg1060 the chain carries Omega-N-methylarginine. 3 positions are modified to phosphoserine: Ser1082, Ser1083, and Ser1085. Arg1101 carries the post-translational modification Omega-N-methylarginine. A phosphoserine mark is found at Ser1106 and Ser1118. Residues 1135 to 1158 (QQCLDCGLCFASPGSLSRHRFISH) form a C2H2-type 9 zinc finger. Residues 1159-1195 (KKRRGVGKASALGLGDGEEEAPPSRSDPDGGDSPLPA) are disordered. Phosphoserine is present on residues Ser1184, Ser1191, and Ser1211. The C2H2-type 10 zinc-finger motif lies at 1200-1222 (LTCKVCGKSCDSPLNLKTHFRTH).

The protein belongs to the krueppel C2H2-type zinc-finger protein family. In terms of assembly, interacts with ZMYND8. In terms of tissue distribution, widely expressed with highest levels in obvary, muscle, blood and lung.

It localises to the cytoplasm. It is found in the nucleus. Its function is as follows. May be involved in transcriptional regulation. The protein is Zinc finger protein 687 (ZNF687) of Homo sapiens (Human).